We begin with the raw amino-acid sequence, 424 residues long: 3-isopropylmalate dehydratase large subunit 2 (424 aa).

3 residues coordinate [4Fe-4S] cluster: C299, C359, and C362.

Belongs to the aconitase/IPM isomerase family. LeuC type 2 subfamily. In terms of assembly, heterodimer of LeuC and LeuD. [4Fe-4S] cluster serves as cofactor.

It catalyses the reaction (2R,3S)-3-isopropylmalate = (2S)-2-isopropylmalate. It functions in the pathway amino-acid biosynthesis; L-leucine biosynthesis; L-leucine from 3-methyl-2-oxobutanoate: step 2/4. Functionally, catalyzes the isomerization between 2-isopropylmalate and 3-isopropylmalate, via the formation of 2-isopropylmaleate. This Rubrobacter xylanophilus (strain DSM 9941 / JCM 11954 / NBRC 16129 / PRD-1) protein is 3-isopropylmalate dehydratase large subunit 2.